Reading from the N-terminus, the 455-residue chain is Ribosomal protein uS12 methylthiotransferase RimO (455 aa).

The MTTase N-terminal domain occupies 30 to 140 (PTIGMVSLGC…VLDAVHGAVP (111 aa)). 6 residues coordinate [4Fe-4S] cluster: Cys39, Cys75, Cys104, Cys171, Cys175, and Cys178. Residues 157–386 (LTPRHFSYLK…MEKAQAISEV (230 aa)) form the Radical SAM core domain. The TRAM domain maps to 389–455 (AAKVGRRIEV…GEYDIWGRPV (67 aa)).

Belongs to the methylthiotransferase family. RimO subfamily. [4Fe-4S] cluster is required as a cofactor.

It localises to the cytoplasm. It carries out the reaction L-aspartate(89)-[ribosomal protein uS12]-hydrogen + (sulfur carrier)-SH + AH2 + 2 S-adenosyl-L-methionine = 3-methylsulfanyl-L-aspartate(89)-[ribosomal protein uS12]-hydrogen + (sulfur carrier)-H + 5'-deoxyadenosine + L-methionine + A + S-adenosyl-L-homocysteine + 2 H(+). Functionally, catalyzes the methylthiolation of an aspartic acid residue of ribosomal protein uS12. The polypeptide is Ribosomal protein uS12 methylthiotransferase RimO (Cereibacter sphaeroides (strain ATCC 17023 / DSM 158 / JCM 6121 / CCUG 31486 / LMG 2827 / NBRC 12203 / NCIMB 8253 / ATH 2.4.1.) (Rhodobacter sphaeroides)).